A 247-amino-acid chain; its full sequence is 3-oxoacyl-[acyl-carrier-protein] reductase FabG (247 aa).

Residues 12–15 (GASR), Thr-37, 62–63 (DV), and Asn-89 each bind NADP(+). A substrate-binding site is contributed by Ser-141. Tyr-154 functions as the Proton acceptor in the catalytic mechanism. NADP(+)-binding positions include 154–158 (YAAAK) and Ile-187.

This sequence belongs to the short-chain dehydrogenases/reductases (SDR) family. As to quaternary structure, homotetramer.

It catalyses the reaction a (3R)-hydroxyacyl-[ACP] + NADP(+) = a 3-oxoacyl-[ACP] + NADPH + H(+). It functions in the pathway lipid metabolism; fatty acid biosynthesis. Its function is as follows. Catalyzes the NADPH-dependent reduction of beta-ketoacyl-ACP substrates to beta-hydroxyacyl-ACP products, the first reductive step in the elongation cycle of fatty acid biosynthesis. The sequence is that of 3-oxoacyl-[acyl-carrier-protein] reductase FabG (fabG) from Pseudomonas aeruginosa (strain ATCC 15692 / DSM 22644 / CIP 104116 / JCM 14847 / LMG 12228 / 1C / PRS 101 / PAO1).